The following is a 268-amino-acid chain: Phosphate import ATP-binding protein PstB 3 (268 aa).

Positions 15–254 constitute an ABC transporter domain; it reads LRTENLNVYY…DATESIFNNP (240 aa). 47–54 serves as a coordination point for ATP; it reads GPSGCGKS.

The protein belongs to the ABC transporter superfamily. Phosphate importer (TC 3.A.1.7) family. The complex is composed of two ATP-binding proteins (PstB), two transmembrane proteins (PstC and PstA) and a solute-binding protein (PstS).

It localises to the cell inner membrane. The catalysed reaction is phosphate(out) + ATP + H2O = ADP + 2 phosphate(in) + H(+). Part of the ABC transporter complex PstSACB involved in phosphate import. Responsible for energy coupling to the transport system. This Nostoc sp. (strain PCC 7120 / SAG 25.82 / UTEX 2576) protein is Phosphate import ATP-binding protein PstB 3.